Reading from the N-terminus, the 137-residue chain is Protein PsiE homolog (137 aa).

Helical transmembrane passes span 13–35 (ILLRITLNLALIMVGFTLVAFLI), 55–77 (YYMTQDILTFFLYFEFIALIVKY), 84–103 (FPLRYFIYIGITAIIRFIIV), and 107–129 (SATSTLILSGAILLLVAALFLAN).

This sequence belongs to the PsiE family.

Its subcellular location is the cell membrane. This is Protein PsiE homolog from Listeria monocytogenes serotype 4b (strain F2365).